Reading from the N-terminus, the 219-residue chain is 7-cyano-7-deazaguanine synthase (219 aa).

An ATP-binding site is contributed by 10-20 (FSGGQDSTTCL). The Zn(2+) site is built by C186, C195, C198, and C201.

The protein belongs to the QueC family. As to quaternary structure, homodimer. Zn(2+) serves as cofactor.

It catalyses the reaction 7-carboxy-7-deazaguanine + NH4(+) + ATP = 7-cyano-7-deazaguanine + ADP + phosphate + H2O + H(+). It functions in the pathway purine metabolism; 7-cyano-7-deazaguanine biosynthesis. Catalyzes the ATP-dependent conversion of 7-carboxy-7-deazaguanine (CDG) to 7-cyano-7-deazaguanine (preQ(0)). The polypeptide is 7-cyano-7-deazaguanine synthase (Bacillus velezensis (strain DSM 23117 / BGSC 10A6 / LMG 26770 / FZB42) (Bacillus amyloliquefaciens subsp. plantarum)).